Here is a 342-residue protein sequence, read N- to C-terminus: Probable dual-specificity RNA methyltransferase RlmN (342 aa).

Residue E91 is the Proton acceptor of the active site. The Radical SAM core domain maps to 97–327 (YKHGNSICVS…TTIRREMGAD (231 aa)). A disulfide bridge connects residues C104 and C332. Positions 111, 115, and 118 each coordinate [4Fe-4S] cluster. S-adenosyl-L-methionine is bound by residues 158-159 (GE), S190, 213-215 (SLH), and N289. C332 acts as the S-methylcysteine intermediate in catalysis.

The protein belongs to the radical SAM superfamily. RlmN family. Requires [4Fe-4S] cluster as cofactor.

The protein localises to the cytoplasm. It carries out the reaction adenosine(2503) in 23S rRNA + 2 reduced [2Fe-2S]-[ferredoxin] + 2 S-adenosyl-L-methionine = 2-methyladenosine(2503) in 23S rRNA + 5'-deoxyadenosine + L-methionine + 2 oxidized [2Fe-2S]-[ferredoxin] + S-adenosyl-L-homocysteine. The catalysed reaction is adenosine(37) in tRNA + 2 reduced [2Fe-2S]-[ferredoxin] + 2 S-adenosyl-L-methionine = 2-methyladenosine(37) in tRNA + 5'-deoxyadenosine + L-methionine + 2 oxidized [2Fe-2S]-[ferredoxin] + S-adenosyl-L-homocysteine. In terms of biological role, specifically methylates position 2 of adenine 2503 in 23S rRNA and position 2 of adenine 37 in tRNAs. The sequence is that of Probable dual-specificity RNA methyltransferase RlmN from Clostridium botulinum (strain Okra / Type B1).